We begin with the raw amino-acid sequence, 198 residues long: HTH-type transcriptional regulator BetI (198 aa).

The 61-residue stretch at 8–68 (PLRRRELIDA…ATMRHLLREL (61 aa)) folds into the HTH tetR-type domain. Positions 31-50 (TVAQIAHEAGVSPALAHHYF) form a DNA-binding region, H-T-H motif.

Its pathway is amine and polyamine biosynthesis; betaine biosynthesis via choline pathway [regulation]. Repressor involved in the biosynthesis of the osmoprotectant glycine betaine. It represses transcription of the choline transporter BetT and the genes of BetAB involved in the synthesis of glycine betaine. This chain is HTH-type transcriptional regulator BetI, found in Brucella suis biovar 1 (strain 1330).